A 576-amino-acid chain; its full sequence is (E,E)-alpha-farnesene synthase (576 aa).

5 residues coordinate (2E,6E)-farnesyl diphosphate: arginine 289, aspartate 326, aspartate 330, arginine 468, and asparagine 471. Residues aspartate 326 and aspartate 330 each contribute to the Mg(2+) site. The short motif at aspartate 326–aspartate 330 is the DDXXD motif element. Positions 471, 475, and 479 each coordinate Mg(2+). Residues aspartate 484 and serine 487 each coordinate K(+).

It belongs to the terpene synthase family. Tpsb subfamily. Monomer. It depends on Mg(2+) as a cofactor. Requires Mn(2+) as cofactor. The cofactor is K(+).

Its subcellular location is the cytoplasm. It carries out the reaction (2E,6E)-farnesyl diphosphate = (3E,6E)-alpha-farnesene + diphosphate. In terms of biological role, sesquiterpene synthase catalyzing the production of (E,E)-alpha-farnesene, the predominant terpene produced during storage of fruits. Produces all six isomers (E,E)-alpha-farnesene, (Z,E)-alpha-farnesene, (E,Z)-alpha-farnesene, (Z,Z)-alpha-farnesene, (E)-beta-farnesene and (Z)-beta-farnesene from a mix of isomeric forms of the farnesyl diphosphate precursor. Able to convert geranyl diphosphate to the monoterpenes (E)-beta-ocimene, linalool and beta-myrcene. Also has a prenyltransferase activity producing alpha-farnesene directly from geranyl diphosphate and isoprenyl diphosphate. The chain is (E,E)-alpha-farnesene synthase (AFS1) from Malus domestica (Apple).